The following is a 261-amino-acid chain: uncharacterized protein (261 aa).

Polar residues predominate over residues 1-12; the sequence is MSRTSSQNQEII. A disordered region spans residues 1 to 139; the sequence is MSRTSSQNQE…KELDTINKKT (139 aa). Residues 23-55 are compositionally biased toward low complexity; the sequence is SSKPSKSSKPSKSSKPSKSSKTSKSSRSSGSKS. The span at 65–74 shows a compositional bias: basic and acidic residues; that stretch reads SRKDKYKEEY. Over residues 79–108 the composition is skewed to acidic residues; the sequence is YPDEQEYEQEYEQEYEQEYQDNGEQTEEFV. Positions 122 to 139 are enriched in basic and acidic residues; it reads DERQTQSNKELDTINKKT. Coiled-coil stretches lie at residues 151–181 and 218–243; these read MDHDDNIKRLNAKMKAFKDAKKQEEESIIKL and EDIIRDALMEVVRNERKVAELVKKIE.

This is an uncharacterized protein from Acanthamoeba polyphaga (Amoeba).